The sequence spans 243 residues: MQTIIISPLVSHRLCLARAVPCNRLLNNHHRAPPSIRLSNHRSTTSLRLFSSAAASRDSEMATEDVQDPRIAKIASSIRVIPDFPKPGIMFQDITTLLLDTEAFKDTIALFVDRYKDKGISVVAGVEARGFIFGPPIALAIGAKFVPMRKPKKLPGKVISEEYSLEYGTDTIEMHVGAVEPGERAIIIDDLIATGGTLAAAIRLLERVGVKIVECACVIELPELKGKEKLGETSLFVLVKSAA.

Residues 1 to 52 (MQTIIISPLVSHRLCLARAVPCNRLLNNHHRAPPSIRLSNHRSTTSLRLFSS) constitute a chloroplast transit peptide. The residue at position 2 (Q2) is an N-acetylalanine.

This sequence belongs to the purine/pyrimidine phosphoribosyltransferase family. In terms of assembly, homodimer.

The protein resides in the plastid. It is found in the chloroplast. The protein localises to the cytoplasm. It catalyses the reaction AMP + diphosphate = 5-phospho-alpha-D-ribose 1-diphosphate + adenine. It functions in the pathway purine metabolism; AMP biosynthesis via salvage pathway; AMP from adenine: step 1/1. Functionally, catalyzes a salvage reaction resulting in the formation of AMP, that is energically less costly than de novo synthesis. Contributes primarily to the recycling of adenine into adenylate nucleotides, but is also involved in the inactivation of cytokinins by phosphoribosylation. Catalyzes the conversion of cytokinins from free bases (active form) to the corresponding nucleotides (inactive form). In Arabidopsis thaliana (Mouse-ear cress), this protein is Adenine phosphoribosyltransferase 1, chloroplastic (APT1).